Reading from the N-terminus, the 502-residue chain is Hippocampus abundant transcript-like protein 1 (502 aa).

Residues 1–12 are compositionally biased toward basic and acidic residues; that stretch reads MNAEPPEEKAAS. Positions 1–27 are disordered; that stretch reads MNAEPPEEKAASEAEAGAMPEKRAGSR. The Extracellular segment spans residues 1–46; that stretch reads MNAEPPEEKAASEAEAGAMPEKRAGSRAAGGNSLQGFGRPSVYHAA. A helical transmembrane segment spans residues 47-67; sequence IVIFLEFFAWGLLTTSMLTVL. The Cytoplasmic portion of the chain corresponds to 68–79; sequence HETFPQHTFLMN. Residues 80-100 traverse the membrane as a helical segment; the sequence is GLIQGVKGLLSFLSAPLIGAL. Residues 101 to 108 lie on the Extracellular side of the membrane; that stretch reads SDVWGRKP. Residues 109 to 129 traverse the membrane as a helical segment; that stretch reads FLLGTVFFTCFPIPLMRISPW. Residues 130-131 lie on the Cytoplasmic side of the membrane; sequence WY. A helical transmembrane segment spans residues 132–152; the sequence is FAMISISGVFSVTFSVIFAYV. Residues 153-165 are Extracellular-facing; sequence ADVTQEHERSTAY. The helical transmembrane segment at 166 to 186 threads the bilayer; sequence GWVSATFAASLVSSPAIGAYL. Over 187–193 the chain is Cytoplasmic; it reads SASYGDS. Residues 194–214 traverse the membrane as a helical segment; the sequence is LVVLVATVVALLDICFILLAV. Residues 215–248 lie on the Extracellular side of the membrane; sequence PESLPEKMRPLSWGARISWKQADPFASLKKVGKD. A helical membrane pass occupies residues 249–269; the sequence is STILLICITVFLSYLPEAGQY. Over 270–278 the chain is Cytoplasmic; the sequence is SSFFLYLRQ. A helical membrane pass occupies residues 279 to 299; the sequence is VIGFGSIKIAAFIAMVGILSI. Residues 300 to 316 are Extracellular-facing; sequence VAQTVFLTSLMRSLGNK. A helical transmembrane segment spans residues 317 to 337; sequence NTVLLGLGFQMFQLAWYGFGS. Position 338 (glutamine 338) is a topological domain, cytoplasmic. Residues 339–359 traverse the membrane as a helical segment; the sequence is AWMMWAAGIVAAVSSITFPAV. Topologically, residues 360–384 are extracellular; that stretch reads STLVSQNADSNQQGVAQGIITGIRG. A helical membrane pass occupies residues 385-405; sequence LCNGLGPALYGFIFYMFHVEL. The Cytoplasmic portion of the chain corresponds to 406–425; that stretch reads TELEPELISNNAALQGAVIP. The chain crosses the membrane as a helical span at residues 426–446; the sequence is GPPFLFGACIVFMSFLVAVFI. Residues 447–502 are Extracellular-facing; that stretch reads PEYSKGGIQKHSNSISGSLANTPERGSDEDIEPLLQDSSIWELSSLEEPGHQCTEL.

It belongs to the major facilitator superfamily.

The protein resides in the membrane. This Bos taurus (Bovine) protein is Hippocampus abundant transcript-like protein 1.